The sequence spans 379 residues: Class V chitinase (379 aa).

An N-terminal signal peptide occupies residues 1 to 24 (MSSTKLISLIVSITFFLTLQCSMA). The GH18 domain maps to 27–369 (VVKASYWFPA…RAASQAWDAT (343 aa)). Chitin is bound at residue glycine 99. The active-site Proton donor is the glutamate 140. Residue tyrosine 259 coordinates chitin. Residues asparagine 307 and asparagine 327 are each glycosylated (N-linked (GlcNAc...) asparagine). Tryptophan 348 contributes to the chitin binding site.

It belongs to the glycosyl hydrolase 18 family. Chitinase class V subfamily.

The enzyme catalyses Random endo-hydrolysis of N-acetyl-beta-D-glucosaminide (1-&gt;4)-beta-linkages in chitin and chitodextrins.. It carries out the reaction Hydrolysis of N,N'-diacetylchitobiose from the non-reducing end of chitin and chitodextrins.. Its pathway is glycan degradation; chitin degradation. Functionally, can hydrolyze glycol chitin and chitin oligosaccharides (e.g. N-acetylglucosamine) (GlcNAc)4, (GlcNAc)5 and (GlcNAc)6. Hydrolyzes N-acetylglucosamine oligomers producing dimers from the non-reducing end of the substrates. The sequence is that of Class V chitinase from Arabidopsis thaliana (Mouse-ear cress).